The chain runs to 506 residues: Proline--tRNA ligase (506 aa).

Belongs to the class-II aminoacyl-tRNA synthetase family. ProS type 3 subfamily. Homodimer.

It is found in the cytoplasm. The enzyme catalyses tRNA(Pro) + L-proline + ATP = L-prolyl-tRNA(Pro) + AMP + diphosphate. Its function is as follows. Catalyzes the attachment of proline to tRNA(Pro) in a two-step reaction: proline is first activated by ATP to form Pro-AMP and then transferred to the acceptor end of tRNA(Pro). The polypeptide is Proline--tRNA ligase (Akkermansia muciniphila (strain ATCC BAA-835 / DSM 22959 / JCM 33894 / BCRC 81048 / CCUG 64013 / CIP 107961 / Muc)).